Reading from the N-terminus, the 325-residue chain is tRNA dimethylallyltransferase (325 aa).

25 to 32 (GNTGSGKS) is a binding site for ATP. 27–32 (TGSGKS) provides a ligand contact to substrate. Positions 50-53 (DSRQ) are interaction with substrate tRNA.

This sequence belongs to the IPP transferase family. In terms of assembly, monomer. It depends on Mg(2+) as a cofactor.

The catalysed reaction is adenosine(37) in tRNA + dimethylallyl diphosphate = N(6)-dimethylallyladenosine(37) in tRNA + diphosphate. Its function is as follows. Catalyzes the transfer of a dimethylallyl group onto the adenine at position 37 in tRNAs that read codons beginning with uridine, leading to the formation of N6-(dimethylallyl)adenosine (i(6)A). This is tRNA dimethylallyltransferase from Dehalococcoides mccartyi (strain ATCC BAA-2266 / KCTC 15142 / 195) (Dehalococcoides ethenogenes (strain 195)).